The chain runs to 279 residues: HTH-type transcriptional regulator HdfR (279 aa).

Residues 1 to 58 (MDTELLKTFLEVSRTRHFGRAAESLYLTQSAVSFRIRQLENQLGVNLFTRHRNNIRLT) enclose the HTH lysR-type domain. The segment at residues 18 to 37 (FGRAAESLYLTQSAVSFRIR) is a DNA-binding region (H-T-H motif).

Belongs to the LysR transcriptional regulatory family.

Its function is as follows. Negatively regulates the transcription of the flagellar master operon flhDC by binding to the upstream region of the operon. The sequence is that of HTH-type transcriptional regulator HdfR from Escherichia fergusonii (strain ATCC 35469 / DSM 13698 / CCUG 18766 / IAM 14443 / JCM 21226 / LMG 7866 / NBRC 102419 / NCTC 12128 / CDC 0568-73).